The sequence spans 228 residues: 5'-methylthioadenosine/S-adenosylhomocysteine nucleosidase (228 aa).

The active-site Proton acceptor is the Glu11. Substrate-binding positions include Gly77, Ile151, and 172 to 173 (ME). The active-site Proton donor is the Asp196.

The protein belongs to the PNP/UDP phosphorylase family. MtnN subfamily.

The enzyme catalyses S-adenosyl-L-homocysteine + H2O = S-(5-deoxy-D-ribos-5-yl)-L-homocysteine + adenine. The catalysed reaction is S-methyl-5'-thioadenosine + H2O = 5-(methylsulfanyl)-D-ribose + adenine. It carries out the reaction 5'-deoxyadenosine + H2O = 5-deoxy-D-ribose + adenine. Its pathway is amino-acid biosynthesis; L-methionine biosynthesis via salvage pathway; S-methyl-5-thio-alpha-D-ribose 1-phosphate from S-methyl-5'-thioadenosine (hydrolase route): step 1/2. In terms of biological role, catalyzes the irreversible cleavage of the glycosidic bond in both 5'-methylthioadenosine (MTA) and S-adenosylhomocysteine (SAH/AdoHcy) to adenine and the corresponding thioribose, 5'-methylthioribose and S-ribosylhomocysteine, respectively. Also cleaves 5'-deoxyadenosine, a toxic by-product of radical S-adenosylmethionine (SAM) enzymes, into 5-deoxyribose and adenine. The protein is 5'-methylthioadenosine/S-adenosylhomocysteine nucleosidase of Staphylococcus saprophyticus subsp. saprophyticus (strain ATCC 15305 / DSM 20229 / NCIMB 8711 / NCTC 7292 / S-41).